A 299-amino-acid polypeptide reads, in one-letter code: NAD kinase (299 aa).

D71 (proton acceptor) is an active-site residue. NAD(+) contacts are provided by residues 71–72 (DG), 145–146 (ND), R173, D175, 186–191 (TAYSLS), A210, and Q248.

It belongs to the NAD kinase family. The cofactor is a divalent metal cation.

Its subcellular location is the cytoplasm. The catalysed reaction is NAD(+) + ATP = ADP + NADP(+) + H(+). Functionally, involved in the regulation of the intracellular balance of NAD and NADP, and is a key enzyme in the biosynthesis of NADP. Catalyzes specifically the phosphorylation on 2'-hydroxyl of the adenosine moiety of NAD to yield NADP. This chain is NAD kinase, found in Bordetella bronchiseptica (strain ATCC BAA-588 / NCTC 13252 / RB50) (Alcaligenes bronchisepticus).